Consider the following 3948-residue polypeptide: Hybrid PKS-NRPS synthetase fsa1 (3948 aa).

A Ketosynthase family 3 (KS3) domain is found at 4-438; it reads SEPIAVIGSA…GTNAHAIIEA (435 aa). Catalysis depends on for beta-ketoacyl synthase activity residues Cys-177, His-316, and His-358. Residues 543 to 846 form a malonyl-CoA:ACP transacylase (MAT) domain region; sequence IFTGQGTQWP…LDTIEAISEG (304 aa). Positions 931–1066 are N-terminal hotdog fold; that stretch reads HPLLGRRCHD…AQIKASLGTP (136 aa). A dehydratase (DH) domain region spans residues 931 to 1233; the sequence is HPLLGRRCHD…MELVPFSPAT (303 aa). In terms of domain architecture, PKS/mFAS DH spans 931-1235; that stretch reads HPLLGRRCHD…LVPFSPATPA (305 aa). The Proton acceptor; for dehydratase activity role is filled by His-964. Residues 1081-1235 form a C-terminal hotdog fold region; the sequence is LRPVSVDRFY…LVPFSPATPA (155 aa). Asp-1141 acts as the Proton donor; for dehydratase activity in catalysis. The segment at 1381 to 1578 is methyltransferase (MT) domain; it reads YEQGFGLNLV…TTPPVHKILP (198 aa). Residues 2105–2277 form a ketoreductase (KR) domain region; it reads TFLLIGLTGE…VAASSIDISS (173 aa). In terms of domain architecture, Carrier 1 spans 2389 to 2464; that stretch reads AIIKESFIVR…DLVDESLDLL (76 aa). Ser-2424 is modified (O-(pantetheine 4'-phosphoryl)serine). Residues 2475–2555 are disordered; it reads EAGNAHPAKP…TDNLTPPRTF (81 aa). 2 stretches are compositionally biased toward polar residues: residues 2487 to 2505 and 2513 to 2528; these read VIPQ…QGTS and GSDS…LTSW. A compositionally biased stretch (basic and acidic residues) spans 2529–2541; sequence DRQDLSPPDKSDD. A compositionally biased stretch (polar residues) spans 2542 to 2551; that stretch reads APNSTDNLTP. The interval 2547–2976 is condensation (C) domain; it reads DNLTPPRTFP…TQVLLRSYLS (430 aa). The interval 3000 to 3402 is adenylation (A) (KR) domain; sequence LKVAVDAGKA…PDTFFGTSGT (403 aa). Positions 3540–3617 constitute a Carrier 2 domain; the sequence is KSLTASEKRL…AMASVLEDCG (78 aa). At Ser-3577 the chain carries O-(pantetheine 4'-phosphoryl)serine. The reductase (RED) domain stretch occupies residues 3653-3870; sequence LTGSSGYLGR…MPVNEIVEAI (218 aa).

This sequence in the C-terminal section; belongs to the NRP synthetase family.

It carries out the reaction L-serine + 7 malonyl-CoA + acetyl-CoA + 2 S-adenosyl-L-methionine + ATP + 8 NADPH + 11 H(+) = (5S)-3-[(2E,6R,8E,10E,12E)-2,6-dimethyltetradeca-2,8,10,12-tetraenoyl]-5-(hydroxymethyl)pyrrolidine-2,4-dione + AMP + 2 S-adenosyl-L-homocysteine + 7 CO2 + diphosphate + 8 NADP(+) + 8 CoA + 6 H2O. The protein operates within mycotoxin biosynthesis. Its function is as follows. Hybrid PKS-NRPS synthetase; part of the gene cluster that mediates the biosynthesis of HIV-1 integrase inhibitor equisetin and of fusarisetin A, both trans-fused decalin-containing tetramic acids showing also antimicrobial activity. The PKS module of fsa1 together with the enoylreductase fsa3 catalyze the formation of the polyketide unit which is then conjugated to L-serine by the condensation domain of the fsa1 NRPS module. Activity of the Dieckmann cyclase domain (RED) results in release of the Dieckmann product intermediate. Diels-Alderase fsa2 is involved in endo-selective Diels-Alder cycloaddition to form the decalin ring, leading to the production of N-desmethylequisetin also called trichosetin. Subsequent N-methylation is carried out by fsa4 to give equisetin. The enzymatic gene responsible for the conversion of equisetin to fusarisetin A has not been identified yet and is probably located outside of the fsa cluster. In Fusarium sp. (strain FN080326), this protein is Hybrid PKS-NRPS synthetase fsa1.